Reading from the N-terminus, the 924-residue chain is Intercellular adhesion molecule 5 (924 aa).

Positions methionine 1–glutamine 31 are cleaved as a signal peptide. Residues glutamate 32–tryptophan 835 lie on the Extracellular side of the membrane. Ig-like C2-type domains are found at residues glycine 48 to proline 130, glycine 135 to alanine 235, glycine 242 to leucine 329, glycine 337 to leucine 402, proline 408 to threonine 486, proline 491 to threonine 568, proline 573 to alanine 662, proline 666 to threonine 739, and proline 746 to arginine 830. Asparagine 54 carries N-linked (GlcNAc...) (high mannose) asparagine glycosylation. Cystine bridges form between cysteine 55–cysteine 99 and cysteine 59–cysteine 103. N-linked (GlcNAc...) asparagine glycans are attached at residues asparagine 74 and asparagine 137. Residues cysteine 142 and cysteine 198 are joined by a disulfide bond. Threonine 182 and threonine 184 each carry phosphothreonine. Asparagine 195 and asparagine 214 each carry an N-linked (GlcNAc...) asparagine glycan. Cysteine 249 and cysteine 302 form a disulfide bridge. N-linked (GlcNAc...) asparagine glycans are attached at residues asparagine 303, asparagine 316, asparagine 371, and asparagine 397. A disulfide bond links cysteine 344 and cysteine 383. 3 disulfide bridges follow: cysteine 415/cysteine 470, cysteine 498/cysteine 552, and cysteine 580/cysteine 645. N-linked (GlcNAc...) asparagine glycosylation is found at asparagine 583 and asparagine 646. Cysteine 673 and cysteine 725 are oxidised to a cystine. N-linked (GlcNAc...) asparagine glycans are attached at residues asparagine 764, asparagine 795, and asparagine 796. Cysteine 769 and cysteine 814 are oxidised to a cystine. Residues leucine 836 to leucine 856 form a helical membrane-spanning segment. Topologically, residues alanine 857–alanine 924 are cytoplasmic. Positions alanine 891–alanine 903 are enriched in gly residues. The disordered stretch occupies residues alanine 891 to proline 911.

This sequence belongs to the immunoglobulin superfamily. ICAM family. In terms of processing, glycosylation at Asn-54 is critical for functional folding. In terms of tissue distribution, expressed on neurons in the most rostral segment of the mammalian brain, the telencephalon.

It is found in the membrane. Functionally, ICAM proteins are ligands for the leukocyte adhesion protein LFA-1 (integrin alpha-L/beta-2). The chain is Intercellular adhesion molecule 5 (ICAM5) from Homo sapiens (Human).